We begin with the raw amino-acid sequence, 327 residues long: Malate dehydrogenase (327 aa).

Residue 11 to 17 (GAAGQIA) coordinates NAD(+). Positions 92 and 98 each coordinate substrate. NAD(+) is bound by residues Asn-105, Gln-112, and 129–131 (VGN). Residues Asn-131 and Arg-162 each coordinate substrate. The active-site Proton acceptor is His-187.

Belongs to the LDH/MDH superfamily. MDH type 2 family.

It catalyses the reaction (S)-malate + NAD(+) = oxaloacetate + NADH + H(+). In terms of biological role, catalyzes the reversible oxidation of malate to oxaloacetate. In Nitrosospira multiformis (strain ATCC 25196 / NCIMB 11849 / C 71), this protein is Malate dehydrogenase.